We begin with the raw amino-acid sequence, 121 residues long: Large ribosomal subunit protein bL12 (121 aa).

The protein belongs to the bacterial ribosomal protein bL12 family. As to quaternary structure, homodimer. Part of the ribosomal stalk of the 50S ribosomal subunit. Forms a multimeric L10(L12)X complex, where L10 forms an elongated spine to which 2 to 4 L12 dimers bind in a sequential fashion. Binds GTP-bound translation factors.

In terms of biological role, forms part of the ribosomal stalk which helps the ribosome interact with GTP-bound translation factors. Is thus essential for accurate translation. The polypeptide is Large ribosomal subunit protein bL12 (Anoxybacillus flavithermus (strain DSM 21510 / WK1)).